The following is a 170-amino-acid chain: Small ribosomal subunit protein bS18c (170 aa).

Disordered regions lie at residues 1–60 (MYTS…GPGD) and 149–170 (NRNL…SSDC). 7 repeats span residues 4 to 10 (SKQPFLK), 11 to 17 (SKQPFSK), 18 to 24 (SEQPFSK), 25 to 31 (SEQPFRK), 32 to 38 (SKQTFRK), 39 to 45 (FKQPFRK), and 46 to 52 (SKQPFRR). The interval 4-52 (SKQPFLKSKQPFSKSEQPFSKSEQPFRKSKQTFRKFKQPFRKSKQPFRR) is 7 X 7 AA tandem repeats. A compositionally biased stretch (polar residues) spans 13 to 26 (QPFSKSEQPFSKSE). Residues 30–55 (RKSKQTFRKFKQPFRKSKQPFRRRPR) are compositionally biased toward basic residues.

Belongs to the bacterial ribosomal protein bS18 family. In terms of assembly, part of the 30S ribosomal subunit.

Its subcellular location is the plastid. It is found in the chloroplast. This Secale cereale (Rye) protein is Small ribosomal subunit protein bS18c (rps18).